We begin with the raw amino-acid sequence, 444 residues long: Proline--tRNA ligase (444 aa).

This sequence belongs to the class-II aminoacyl-tRNA synthetase family. ProS type 2 subfamily. As to quaternary structure, homodimer.

It is found in the cytoplasm. The catalysed reaction is tRNA(Pro) + L-proline + ATP = L-prolyl-tRNA(Pro) + AMP + diphosphate. In terms of biological role, catalyzes the attachment of proline to tRNA(Pro) in a two-step reaction: proline is first activated by ATP to form Pro-AMP and then transferred to the acceptor end of tRNA(Pro). The sequence is that of Proline--tRNA ligase from Pelagibacter ubique (strain HTCC1062).